A 588-amino-acid polypeptide reads, in one-letter code: Aspartate--tRNA ligase (588 aa).

Glu-172 is a binding site for L-aspartate. The aspartate stretch occupies residues 196-199 (QLFK). Residue Arg-218 coordinates L-aspartate. ATP contacts are provided by residues 218–220 (RDE) and Gln-227. Residue His-449 participates in L-aspartate binding. Glu-483 lines the ATP pocket. Arg-490 serves as a coordination point for L-aspartate. 535–538 (GLDR) serves as a coordination point for ATP.

Belongs to the class-II aminoacyl-tRNA synthetase family. Type 1 subfamily. Homodimer.

Its subcellular location is the cytoplasm. It carries out the reaction tRNA(Asp) + L-aspartate + ATP = L-aspartyl-tRNA(Asp) + AMP + diphosphate. In terms of biological role, catalyzes the attachment of L-aspartate to tRNA(Asp) in a two-step reaction: L-aspartate is first activated by ATP to form Asp-AMP and then transferred to the acceptor end of tRNA(Asp). The chain is Aspartate--tRNA ligase from Haemophilus influenzae (strain 86-028NP).